A 304-amino-acid polypeptide reads, in one-letter code: Protein INO2 (304 aa).

Positions 236-290 (VRKWKHVQMEKIRRINTKEAFERLIKSVRTPPKENGKRIPKHILLTCVMNDIKSI) constitute a bHLH domain.

In terms of assembly, efficient DNA binding requires dimerization with another bHLH protein.

The protein localises to the nucleus. In terms of biological role, positive regulatory factor required for depression of the coregulated phospholipid biosynthetic enzymes. Also involved in the expression of ITR1. This Saccharomyces cerevisiae (strain ATCC 204508 / S288c) (Baker's yeast) protein is Protein INO2 (INO2).